A 204-amino-acid chain; its full sequence is Large ribosomal subunit protein eL15 (204 aa).

The segment at 185–204 (GGSRRAAWKRKNREHMHRKR) is disordered. Residues 190 to 204 (AAWKRKNREHMHRKR) show a composition bias toward basic residues.

The protein belongs to the eukaryotic ribosomal protein eL15 family.

The sequence is that of Large ribosomal subunit protein eL15 (RpL15) from Drosophila melanogaster (Fruit fly).